Consider the following 423-residue polypeptide: 58 kDa phosphoprotein (423 aa).

Basic and acidic residues predominate over residues 46–60 (KMGYEKMKSEDSTEE). The tract at residues 46–82 (KMGYEKMKSEDSTEEKSDEEEEDEEEEEEEEEDDDPE) is disordered. Positions 61 to 82 (KSDEEEEDEEEEEEEEEDDDPE) are enriched in acidic residues. TPR repeat units lie at residues 113-146 (ICKL…GNPS), 147-180 (AMIY…NVDS), and 181-214 (ANAY…DYDE). The disordered stretch occupies residues 260 to 301 (KKKAEKMYKENNKRENYDSDSSDSSYSEPDFSGDFPGGMPGG). Residues 264-276 (EKMYKENNKRENY) are compositionally biased toward basic and acidic residues. Residues 292–362 (GDFPGGMPGG…GMPGMPGGMP (71 aa)) are 19 X 3-4 AA approximate repeats. Residues 361 to 423 (MPDLNSPEMK…GGMMGEKPKP (63 aa)) enclose the STI1 domain.

It is found in the cytoplasm. Functionally, may play a role in protein folding or protein-protein interactions. May act as a co-chaperone. The polypeptide is 58 kDa phosphoprotein (Plasmodium berghei).